Consider the following 331-residue polypeptide: MLSPERLALPDYEYLAQRHVLTYMEDAVCQLLENREDISQYGIARFFTEYFNSVCQGTHILFREFSFVQATPHNRVSFLRAFWRCFRTVGKNGDLLTMKEYHCLLQLLCPDFPLELTQKAARIVLMDDAMDCLMSFSDFLFAFQIQFYYSEFLDSVAAIYENLLSGKNPNTVIVPTSSSGQHRQRPALGEAGMLEGVEASLFYQCLENLCDRHKYSCPPPALVKEALSNVQRLTFYGFLMALSKHHGINQALGALPDKGDLMHDPAMDEELERLLAQVPGLVNSVTASPEASCLPSRTPPRVGSPWRPLHHSRKVDGESDGSTEETDESET.

A required for interaction with PCM1 region spans residues 1 to 111 (MLSPERLALP…HCLLQLLCPD (111 aa)). Residues 1 to 225 (MLSPERLALP…SCPPPALVKE (225 aa)) are required for interaction with TPGS1, LRRC49, and TTLL1. The required for interaction with TPGS2 stretch occupies residues 112-331 (FPLELTQKAA…STEETDESET (220 aa)). The disordered stretch occupies residues 288-331 (SPEASCLPSRTPPRVGSPWRPLHHSRKVDGESDGSTEETDESET). Positions 318–331 (ESDGSTEETDESET) are enriched in acidic residues. S319 is modified (phosphoserine).

The protein belongs to the CSTPP1 family. Interacts with PCM1. Interacts with TTLL1, TPGS1, TPGS2 and LRRC49; the interactions link CSTPP1 to the complex TPGC. Binds to alpha-tubulin.

The protein resides in the cytoplasm. Its subcellular location is the cytoskeleton. It is found in the microtubule organizing center. It localises to the centrosome. The protein localises to the centriolar satellite. Its function is as follows. Regulator of the tubulin polyglutamylase complex (TPGC) that controls cytoskeletal organization, nuclear shape, and cilium disassembly by balancing microtubule and actin assembly. Regulates the assembly and stability of the TPGC and thereby modulates polyglutamylation of the microtubule, which antagonizes MAP4 binding. In Pongo abelii (Sumatran orangutan), this protein is Centriolar satellite-associated tubulin polyglutamylase complex regulator 1 (CSTPP1).